The following is a 788-amino-acid chain: Integrin beta-6 (788 aa).

The first 21 residues, 1–21 (MGIELLCLFFLFLGRNDHVQG), serve as a signal peptide directing secretion. The PSI domain occupies 22–71 (GCALGGAETCEDCLLIGPQCAWCSQENFTYLSGVGERCDTPANLLAKGCQ). At 22 to 709 (GCALGGAETC…KDCPKPPNSP (688 aa)) the chain is on the extracellular side. 28 disulfides stabilise this stretch: cysteine 23–cysteine 41, cysteine 31–cysteine 454, cysteine 34–cysteine 59, cysteine 44–cysteine 70, cysteine 197–cysteine 204, cysteine 252–cysteine 293, cysteine 394–cysteine 406, cysteine 426–cysteine 452, cysteine 456–cysteine 476, cysteine 467–cysteine 479, cysteine 481–cysteine 490, cysteine 492–cysteine 519, cysteine 502–cysteine 517, cysteine 511–cysteine 522, cysteine 524–cysteine 537, cysteine 539–cysteine 560, cysteine 544–cysteine 558, cysteine 552–cysteine 563, cysteine 565–cysteine 574, cysteine 576–cysteine 599, cysteine 583–cysteine 597, cysteine 591–cysteine 602, cysteine 604–cysteine 614, cysteine 617–cysteine 620, cysteine 624–cysteine 670, cysteine 630–cysteine 649, cysteine 633–cysteine 645, and cysteine 678–cysteine 702. Asparagine 48 and asparagine 97 each carry an N-linked (GlcNAc...) asparagine glycan. The VWFA domain occupies 131-371 (YPVDLYYLMD…QLIISAYEEL (241 aa)). The Mg(2+) site is built by aspartate 140, serine 142, and serine 144. The Ca(2+) site is built by serine 144, aspartate 147, aspartate 148, and glutamate 179. The Ca(2+) site is built by asparagine 235, aspartate 237, proline 239, and glutamate 240. Glutamate 240 is a Mg(2+) binding site. An N-linked (GlcNAc...) asparagine glycan is attached at asparagine 260. Ca(2+) contacts are provided by aspartate 271 and lysine 355. Asparagine 387 carries N-linked (GlcNAc...) asparagine glycosylation. The N-linked (GlcNAc...) asparagine glycan is linked to asparagine 418. 4 consecutive I-EGF domains span residues 456-491 (CQKE…PHCE), 492-538 (CGED…PYCQ), 539-575 (CDDF…EYCN), and 576-615 (CTTS…LTCE). N-linked (GlcNAc...) asparagine glycans are attached at residues asparagine 463 and asparagine 471. The chain crosses the membrane as a helical span at residues 710–730 (MIMLGVSLAILLIGVVLLCIW). The interval 731-758 (KLLVSFHDRKEVAKFEAERSKAKWQTGT) is interaction with HAX1. Topologically, residues 731–788 (KLLVSFHDRKEVAKFEAERSKAKWQTGTNPLYRGSTSTFKNVTYKHREKQKVDLSMDG) are cytoplasmic.

The protein belongs to the integrin beta chain family. In terms of assembly, heterodimer of an alpha and a beta subunit. Interacts with FLNB. Interacts with HAX1. ITGAV:ITGB6 interacts with FBN1. ITGAV:ITGB6 interacts with TGFB1.

The protein resides in the cell membrane. The protein localises to the cell junction. It localises to the focal adhesion. Integrin alpha-V:beta-6 (ITGAV:ITGB6) is a receptor for fibronectin and cytotactin. It recognizes the sequence R-G-D in its ligands. ITGAV:ITGB6 acts as a receptor for fibrillin-1 (FBN1) and mediates R-G-D-dependent cell adhesion to FBN1. Integrin alpha-V:beta-6 (ITGAV:ITGB6) mediates R-G-D-dependent release of transforming growth factor beta-1 (TGF-beta-1) from regulatory Latency-associated peptide (LAP), thereby playing a key role in TGF-beta-1 activation. In Sus scrofa (Pig), this protein is Integrin beta-6 (ITGB6).